A 205-amino-acid polypeptide reads, in one-letter code: CASP-like protein 0U1 (205 aa).

Topologically, residues 1–66 (MSGGDIDPTA…GYHKFAVFQF (66 aa)) are cytoplasmic. In terms of domain architecture, MARVEL spans 10–162 (AINSPKFRLI…SMMFTWKEWR (153 aa)). The helical transmembrane segment at 67-87 (LVVICVTYWLFTMLWMGMYLI) threads the bilayer. At 88–90 (QKV) the chain is on the extracellular side. A helical membrane pass occupies residues 91 to 111 (PPAGTEFMIYAVFNVLILIAF). Over 112-137 (STSWTECNETIVDPTYPVCKRATGAK) the chain is Cytoplasmic. A helical membrane pass occupies residues 138 to 158 (ASIAFAMFTWLALCVSMMFTW). Over 159-167 (KEWRDQNYE) the chain is Extracellular. A helical membrane pass occupies residues 168-188 (GLPIFGDFSSFMPGGGGGGMG). The Cytoplasmic segment spans residues 189–205 (GGGGYERPSDVNTQTYA).

It belongs to the Casparian strip membrane proteins (CASP) family. Homodimer and heterodimers.

It localises to the cell membrane. This Micromonas pusilla (strain CCMP1545) (Picoplanktonic green alga) protein is CASP-like protein 0U1.